We begin with the raw amino-acid sequence, 154 residues long: 6,7-dimethyl-8-ribityllumazine synthase (154 aa).

5-amino-6-(D-ribitylamino)uracil contacts are provided by residues Phe24, 56-58 (SFE), and 80-82 (AVV). 85–86 (ET) provides a ligand contact to (2S)-2-hydroxy-3-oxobutyl phosphate. His88 acts as the Proton donor in catalysis. 5-amino-6-(D-ribitylamino)uracil is bound at residue Phe113. Arg127 contacts (2S)-2-hydroxy-3-oxobutyl phosphate.

This sequence belongs to the DMRL synthase family.

It catalyses the reaction (2S)-2-hydroxy-3-oxobutyl phosphate + 5-amino-6-(D-ribitylamino)uracil = 6,7-dimethyl-8-(1-D-ribityl)lumazine + phosphate + 2 H2O + H(+). The protein operates within cofactor biosynthesis; riboflavin biosynthesis; riboflavin from 2-hydroxy-3-oxobutyl phosphate and 5-amino-6-(D-ribitylamino)uracil: step 1/2. In terms of biological role, catalyzes the formation of 6,7-dimethyl-8-ribityllumazine by condensation of 5-amino-6-(D-ribitylamino)uracil with 3,4-dihydroxy-2-butanone 4-phosphate. This is the penultimate step in the biosynthesis of riboflavin. The chain is 6,7-dimethyl-8-ribityllumazine synthase from Thermococcus gammatolerans (strain DSM 15229 / JCM 11827 / EJ3).